We begin with the raw amino-acid sequence, 126 residues long: Prefoldin subunit beta (126 aa).

It belongs to the prefoldin subunit beta family. Heterohexamer of two alpha and four beta subunits.

It localises to the cytoplasm. Functionally, molecular chaperone capable of stabilizing a range of proteins. Seems to fulfill an ATP-independent, HSP70-like function in archaeal de novo protein folding. This is Prefoldin subunit beta (pfdB) from Pyrobaculum aerophilum (strain ATCC 51768 / DSM 7523 / JCM 9630 / CIP 104966 / NBRC 100827 / IM2).